Consider the following 402-residue polypeptide: Phosphoglycerate kinase (402 aa).

Residues 24 to 26, arginine 40, 63 to 66, arginine 122, and arginine 155 each bind substrate; these read DFN and HFGR. ATP-binding positions include lysine 206, glycine 297, glutamate 328, and 357–360; that span reads GGDS.

The protein belongs to the phosphoglycerate kinase family. In terms of assembly, monomer.

It is found in the cytoplasm. The enzyme catalyses (2R)-3-phosphoglycerate + ATP = (2R)-3-phospho-glyceroyl phosphate + ADP. Its pathway is carbohydrate degradation; glycolysis; pyruvate from D-glyceraldehyde 3-phosphate: step 2/5. The protein is Phosphoglycerate kinase of Prochlorococcus marinus (strain MIT 9211).